We begin with the raw amino-acid sequence, 375 residues long: Queuine tRNA-ribosyltransferase (375 aa).

Residue Asp89 is the Proton acceptor of the active site. Substrate contacts are provided by residues 89-93, Asp143, Gln187, and Gly214; that span reads DSGGF. Positions 245-251 are RNA binding; sequence GVGKPED. Asp264 functions as the Nucleophile in the catalytic mechanism. The RNA binding; important for wobble base 34 recognition stretch occupies residues 269–273; that stretch reads TRNAR. The Zn(2+) site is built by Cys302, Cys304, Cys307, and His333.

This sequence belongs to the queuine tRNA-ribosyltransferase family. In terms of assembly, homodimer. Within each dimer, one monomer is responsible for RNA recognition and catalysis, while the other monomer binds to the replacement base PreQ1. Zn(2+) is required as a cofactor.

The enzyme catalyses 7-aminomethyl-7-carbaguanine + guanosine(34) in tRNA = 7-aminomethyl-7-carbaguanosine(34) in tRNA + guanine. It functions in the pathway tRNA modification; tRNA-queuosine biosynthesis. Its function is as follows. Catalyzes the base-exchange of a guanine (G) residue with the queuine precursor 7-aminomethyl-7-deazaguanine (PreQ1) at position 34 (anticodon wobble position) in tRNAs with GU(N) anticodons (tRNA-Asp, -Asn, -His and -Tyr). Catalysis occurs through a double-displacement mechanism. The nucleophile active site attacks the C1' of nucleotide 34 to detach the guanine base from the RNA, forming a covalent enzyme-RNA intermediate. The proton acceptor active site deprotonates the incoming PreQ1, allowing a nucleophilic attack on the C1' of the ribose to form the product. After dissociation, two additional enzymatic reactions on the tRNA convert PreQ1 to queuine (Q), resulting in the hypermodified nucleoside queuosine (7-(((4,5-cis-dihydroxy-2-cyclopenten-1-yl)amino)methyl)-7-deazaguanosine). The chain is Queuine tRNA-ribosyltransferase from Citrobacter koseri (strain ATCC BAA-895 / CDC 4225-83 / SGSC4696).